The primary structure comprises 65 residues: Large ribosomal subunit protein bL35 (65 aa).

Belongs to the bacterial ribosomal protein bL35 family.

The chain is Large ribosomal subunit protein bL35 from Caldicellulosiruptor bescii (strain ATCC BAA-1888 / DSM 6725 / KCTC 15123 / Z-1320) (Anaerocellum thermophilum).